Here is a 283-residue protein sequence, read N- to C-terminus: ATP phosphoribosyltransferase (283 aa).

This sequence belongs to the ATP phosphoribosyltransferase family. Long subfamily. Mg(2+) serves as cofactor.

The protein resides in the cytoplasm. It carries out the reaction 1-(5-phospho-beta-D-ribosyl)-ATP + diphosphate = 5-phospho-alpha-D-ribose 1-diphosphate + ATP. The protein operates within amino-acid biosynthesis; L-histidine biosynthesis; L-histidine from 5-phospho-alpha-D-ribose 1-diphosphate: step 1/9. With respect to regulation, feedback inhibited by histidine. Functionally, catalyzes the condensation of ATP and 5-phosphoribose 1-diphosphate to form N'-(5'-phosphoribosyl)-ATP (PR-ATP). Has a crucial role in the pathway because the rate of histidine biosynthesis seems to be controlled primarily by regulation of HisG enzymatic activity. This is ATP phosphoribosyltransferase from Parabacteroides distasonis (strain ATCC 8503 / DSM 20701 / CIP 104284 / JCM 5825 / NCTC 11152).